We begin with the raw amino-acid sequence, 1029 residues long: MPNTLSLTLSAILARRDWENPGVTQWNRLEAHAPLHSWRLEQPALDDAASASRRSLNGVWRFNYFPAPEQIPEAWVTEDCADAVPMPVPSNWQMQGFDTPIYTNVTYPIPVNPPFVPQENPTGCYSLTFDVDDAWLQSGQTRIIFDGVNSAFHLWCNGRWMGYSQDSRLPAEFNLSTVLRPGENRLAVMVLRWCDGSYLEDQDMWRMSGIFRDVTLLHKPETQIADYRVVTDLNAELDRAVLKADVALAGAGFADCEVVFTLWRKGEKCASVSRRPGSAVVDERGSWDERLTVAIPIDRPALWSAETPELYRLTMALLGPQGEVLEVEACDVGFRRVDISNGLLKLNGKPLLIRGVNRLEHHPENGQVMDEATMRRDIEIMKQHNFNAVRCSHYPNHPLWYRLCDRYGLYVVDEANIETHGMVPMSRLADDPRWLPAMSERVTRMVQRDRNHPSIIIWSLGNESGHGANHDALYRWLKTTDPTRPVQYEGGGANTAATDIVCPMYARVDWDQPFPAVPKWSIKKWIGMPDETRPLILCEYAHAMGNSFGGFAKYWQAFRSHPRLQGGFVWDWVDQALTKKDEKGNAFWAYGGDFGDTPNDRQFCLNGLVFPDRTPHPALYEAQRAQQFFTFTLVSTSPLMIEVQSGYLFRPTDNEVLSWTVARDGKVLASGEVTLAIAPEGVQRLEIALPELKAGPGEIWLNVEVRQPRATPWSPAGHRCAWEQWPLPAPLFIAPPASTGEPPVLTQNDRILEVTHRQQRWQFDRASGYLTQWWRNGVETLLSPVTDNVSRAPLDNDIGVSEATRIDPNAWVERWKAAGMYDLTSRMLHCEAEQHAREVVVTTLNVLEHRGRALFLSRKIWRLDEQGVLHGDIQVDIASDIPKPARIGLSVHLAETPEKVDWLGLGPHENYPDRKLAAQQGRWTLPLADMHTPYIFPTENGLRCDTRKLVLGAHQLNGAFHFSVGRYSQQQLRETTHHHLLREEPGGWLNLDAFHMGVGGDDSWSPSVSPEFILQTRQLRYTFSWQQNP.

Substrate-binding residues include asparagine 104 and aspartate 203. Aspartate 203 lines the Na(+) pocket. Positions 418, 420, and 463 each coordinate Mg(2+). Substrate-binding positions include glutamate 463 and 539–542 (EYAH). Glutamate 463 acts as the Proton donor in catalysis. The active-site Nucleophile is glutamate 539. Asparagine 599 contributes to the Mg(2+) binding site. Positions 603 and 606 each coordinate Na(+). Residues asparagine 606 and tryptophan 1004 each coordinate substrate.

The protein belongs to the glycosyl hydrolase 2 family. As to quaternary structure, homotetramer. Mg(2+) is required as a cofactor. It depends on Na(+) as a cofactor.

The enzyme catalyses Hydrolysis of terminal non-reducing beta-D-galactose residues in beta-D-galactosides.. The sequence is that of Beta-galactosidase 2 from Enterobacter cloacae.